Consider the following 102-residue polypeptide: Peptide chaperone MftB (102 aa).

This sequence belongs to the peptide chaperone MftB family.

Its function is as follows. Peptide chaperone involved in the biosynthesis of the enzyme cofactor mycofactocin (MFT). Binds MftA and MftC with high affinity, and is essential for MftC activity on MftA, likely via the formation of a ternary complex. Is required for the in vivo ethanol assimilation in M.smegmatis. The polypeptide is Peptide chaperone MftB (Mycolicibacterium smegmatis (strain ATCC 700084 / mc(2)155) (Mycobacterium smegmatis)).